Consider the following 320-residue polypeptide: Sliding-clamp-loader large subunit (320 aa).

ATP-binding positions include 12-15 (EQKY), isoleucine 24, 53-58 (GTGKTT), and arginine 205.

Belongs to the Tevenvirinae sliding-clamp-loader large subunit family. In terms of assembly, the sliding-clamp-loader consists of 4 large subunits and 1 small subunit. Interacts with the sliding clamp; this interaction allows the sliding-clamp-loader to open the sliding clamp. Part of the replicase complex that includes the DNA polymerase, the polymerase clamp, the clamp loader complex, the single-stranded DNA binding protein, the primase, the helicase and the helicase assembly factor.

In terms of biological role, forms the sliding-clamp-loader together with the small subunit. Functions as an ATPase enzyme. The clamp loader holds the clamp in an open conformation and places it onto the DNA. 4 ATP molecules must bind to the sliding-clamp-loader before the latter can open the sliding clamp. ATP hydrolysis triggers the detachment of the sliding clamp from the sliding-clamp-loader, freeing the sliding clamp to track along DNA. The polypeptide is Sliding-clamp-loader large subunit (44) (Escherichia phage RB69 (Bacteriophage RB69)).